A 304-amino-acid polypeptide reads, in one-letter code: Elongation factor Ts (304 aa).

An involved in Mg(2+) ion dislocation from EF-Tu region spans residues 80–83 (TDFV).

Belongs to the EF-Ts family.

It localises to the cytoplasm. Functionally, associates with the EF-Tu.GDP complex and induces the exchange of GDP to GTP. It remains bound to the aminoacyl-tRNA.EF-Tu.GTP complex up to the GTP hydrolysis stage on the ribosome. In Clostridium tetani (strain Massachusetts / E88), this protein is Elongation factor Ts.